We begin with the raw amino-acid sequence, 203 residues long: MLVAAAADRNKGPILEVLQQYVDPAAPKVRALEVASGTGQHCAHFAQALPNLHLVPSELDPHSRQSISAYISHWSLSNVEQPRTLDSSKSWETWGFSPNSLHLIICINMIHITEPSCTQGLFKGAGHLLMPGGVLFTYGPYSVNGILTPQSNVDFNISLKRRNPAWGIWDTSDLQNLATTCGMSLERMVDMPANNKCLIFRKK.

It belongs to the UPF0585 family.

The sequence is that of Methyltransferase-like 26 from Xenopus tropicalis (Western clawed frog).